We begin with the raw amino-acid sequence, 327 residues long: Ribosomal RNA large subunit methyltransferase F (327 aa).

The segment at 1–24 (MPRKTSSQPRPAEPKAVLHPRNRH) is disordered.

It belongs to the methyltransferase superfamily. METTL16/RlmF family.

Its subcellular location is the cytoplasm. It carries out the reaction adenosine(1618) in 23S rRNA + S-adenosyl-L-methionine = N(6)-methyladenosine(1618) in 23S rRNA + S-adenosyl-L-homocysteine + H(+). Specifically methylates the adenine in position 1618 of 23S rRNA. This is Ribosomal RNA large subunit methyltransferase F from Stutzerimonas stutzeri (strain A1501) (Pseudomonas stutzeri).